The primary structure comprises 97 residues: Defensin-like protein 301 (97 aa).

A signal peptide spans 1–24 (MEKVTSIFFVLLLISSCLILRSQG). 6 disulfide bridges follow: C28/C47, C34/C53, C39/C55, C65/C84, C71/C92, and C76/C94.

Belongs to the DEFL family.

Its subcellular location is the secreted. The chain is Defensin-like protein 301 from Arabidopsis thaliana (Mouse-ear cress).